Consider the following 339-residue polypeptide: Ketol-acid reductoisomerase (NADP(+)) (339 aa).

In terms of domain architecture, KARI N-terminal Rossmann spans 1–182; it reads MRVYYDRDAD…GGGRSGIIET (182 aa). NADP(+) is bound by residues 24 to 27, Arg-48, Ser-51, Thr-53, and 83 to 86; these read YGSQ and DELQ. His-108 is an active-site residue. Gly-134 contributes to the NADP(+) binding site. Residues 183–328 form the KARI C-terminal knotted domain; sequence SFREECETDL…EKLRAMMPWI (146 aa). The Mg(2+) site is built by Asp-191, Glu-195, Glu-227, and Glu-231. Ser-252 is a binding site for substrate.

Belongs to the ketol-acid reductoisomerase family. Mg(2+) is required as a cofactor.

The enzyme catalyses (2R)-2,3-dihydroxy-3-methylbutanoate + NADP(+) = (2S)-2-acetolactate + NADPH + H(+). It carries out the reaction (2R,3R)-2,3-dihydroxy-3-methylpentanoate + NADP(+) = (S)-2-ethyl-2-hydroxy-3-oxobutanoate + NADPH + H(+). Its pathway is amino-acid biosynthesis; L-isoleucine biosynthesis; L-isoleucine from 2-oxobutanoate: step 2/4. It functions in the pathway amino-acid biosynthesis; L-valine biosynthesis; L-valine from pyruvate: step 2/4. Its function is as follows. Involved in the biosynthesis of branched-chain amino acids (BCAA). Catalyzes an alkyl-migration followed by a ketol-acid reduction of (S)-2-acetolactate (S2AL) to yield (R)-2,3-dihydroxy-isovalerate. In the isomerase reaction, S2AL is rearranged via a Mg-dependent methyl migration to produce 3-hydroxy-3-methyl-2-ketobutyrate (HMKB). In the reductase reaction, this 2-ketoacid undergoes a metal-dependent reduction by NADPH to yield (R)-2,3-dihydroxy-isovalerate. In Paramagnetospirillum magneticum (strain ATCC 700264 / AMB-1) (Magnetospirillum magneticum), this protein is Ketol-acid reductoisomerase (NADP(+)).